The chain runs to 316 residues: 4-hydroxy-3-methylbut-2-enyl diphosphate reductase (316 aa).

A [4Fe-4S] cluster-binding site is contributed by Cys12. The (2E)-4-hydroxy-3-methylbut-2-enyl diphosphate site is built by His41 and His74. Positions 41 and 74 each coordinate dimethylallyl diphosphate. Isopentenyl diphosphate-binding residues include His41 and His74. Cys96 is a [4Fe-4S] cluster binding site. Residue His124 participates in (2E)-4-hydroxy-3-methylbut-2-enyl diphosphate binding. A dimethylallyl diphosphate-binding site is contributed by His124. Residue His124 coordinates isopentenyl diphosphate. Residue Glu126 is the Proton donor of the active site. Thr167 serves as a coordination point for (2E)-4-hydroxy-3-methylbut-2-enyl diphosphate. Residue Cys197 participates in [4Fe-4S] cluster binding. 4 residues coordinate (2E)-4-hydroxy-3-methylbut-2-enyl diphosphate: Ser225, Ser226, Asn227, and Ser269. Residues Ser225, Ser226, Asn227, and Ser269 each coordinate dimethylallyl diphosphate. Isopentenyl diphosphate-binding residues include Ser225, Ser226, Asn227, and Ser269.

It belongs to the IspH family. Homodimer. The cofactor is [4Fe-4S] cluster.

It catalyses the reaction isopentenyl diphosphate + 2 oxidized [2Fe-2S]-[ferredoxin] + H2O = (2E)-4-hydroxy-3-methylbut-2-enyl diphosphate + 2 reduced [2Fe-2S]-[ferredoxin] + 2 H(+). It carries out the reaction dimethylallyl diphosphate + 2 oxidized [2Fe-2S]-[ferredoxin] + H2O = (2E)-4-hydroxy-3-methylbut-2-enyl diphosphate + 2 reduced [2Fe-2S]-[ferredoxin] + 2 H(+). The protein operates within isoprenoid biosynthesis; dimethylallyl diphosphate biosynthesis; dimethylallyl diphosphate from (2E)-4-hydroxy-3-methylbutenyl diphosphate: step 1/1. It functions in the pathway isoprenoid biosynthesis; isopentenyl diphosphate biosynthesis via DXP pathway; isopentenyl diphosphate from 1-deoxy-D-xylulose 5-phosphate: step 6/6. Its function is as follows. Catalyzes the conversion of 1-hydroxy-2-methyl-2-(E)-butenyl 4-diphosphate (HMBPP) into a mixture of isopentenyl diphosphate (IPP) and dimethylallyl diphosphate (DMAPP). Acts in the terminal step of the DOXP/MEP pathway for isoprenoid precursor biosynthesis. The chain is 4-hydroxy-3-methylbut-2-enyl diphosphate reductase from Salmonella paratyphi A (strain ATCC 9150 / SARB42).